The chain runs to 28 residues: Alpha-(1-6)-linked fucose-specific lectin (28 aa).

In terms of assembly, homohexamer. Expressed by mycelium-forming spores.

It is found in the secreted. In terms of biological role, alpha-(1-6)-linked L-fucose specific lectin. The polypeptide is Alpha-(1-6)-linked fucose-specific lectin (Rhizopus stolonifer (Rhizopus nigricans)).